The chain runs to 678 residues: Transcriptional regulator CRZ1 (678 aa).

The span at 1 to 21 shows a compositional bias: polar residues; it reads MSFSNGNMASYMTSSNGEEQS. 2 disordered regions span residues 1–50 and 159–195; these read MSFS…SHTF and TPADNQHRPSLTNQFLSPRSNYDGTTRSSGIDSNYSD. Residues 34 to 47 are compositionally biased toward low complexity; that stretch reads YRRNNFRNSSNSGS. The segment covering 166–195 has biased composition (polar residues); the sequence is RPSLTNQFLSPRSNYDGTTRSSGIDSNYSD. A Phosphothreonine modification is found at Thr170. Phosphoserine occurs at positions 175, 245, and 385. Positions 401 to 486 are disordered; it reads KLKKSRRRSS…SNFNEDNNNN (86 aa). Residues 410–428 are compositionally biased toward low complexity; that stretch reads SQTSNNSFTSRRSSRSRSI. Basic and acidic residues-rich tracts occupy residues 429-446 and 457-467; these read SPDEKAKSISANREKLLE and DNNRERYDNDS. Residues 472-486 show a composition bias toward low complexity; the sequence is NTINSSNFNEDNNNN. 2 C2H2-type zinc fingers span residues 569-591 and 597-619; these read FACDVCGKKFTRPYNLKSHLRTH and FICSICGKAFARQHDRKRHEDLH.

In terms of processing, phosphorylated. Dephosphorylated by calcineurin which leads to rapid translocation from the cytoplasm to the nucleus. Phosphorylated by the cyclin-CDK PHO80-PHO85.

It is found in the nucleus. The protein resides in the cytoplasm. In terms of biological role, involved in the regulation of calcium ion homeostasis. Binds to the calcineurin-dependent response element. Transcriptionally regulates PMC1, PMR1, PMR2A and FKS2. This chain is Transcriptional regulator CRZ1 (CRZ1), found in Saccharomyces cerevisiae (strain ATCC 204508 / S288c) (Baker's yeast).